Consider the following 1512-residue polypeptide: Zinc finger protein 608 (1512 aa).

5 disordered regions span residues 1 to 23 (MSVNISTAGKGVDPNTVDTYDSG), 46 to 74 (QKFEMNNSTTTTSSSNSKDCGGPASSGAG), 89 to 237 (QASA…HLYG), 260 to 295 (VAAAGEVSKSAPDSGLMGNSMLVKKEEEEEESHRRI), and 417 to 545 (RFCE…FLDQ). Composition is skewed to low complexity over residues 51 to 74 (NNSTTTTSSSNSKDCGGPASSGAG) and 151 to 185 (SALGQSVSSGGSGNPNSNSTSTSTSAATAGAGSCG). The span at 201–218 (AKRDKDAGKSRKDKHDLL) shows a compositional bias: basic and acidic residues. Residues 220 to 230 (GHQNGSGSQAP) are compositionally biased toward polar residues. Residues 260-270 (VAAAGEVSKSA) are compositionally biased toward low complexity. Residues 278-304 (NSMLVKKEEEEEESHRRIKKLKTEKVD) are a coiled coil. Residue Lys283 forms a Glycyl lysine isopeptide (Lys-Gly) (interchain with G-Cter in SUMO2) linkage. Phosphoserine occurs at positions 421 and 424. Residues 449–458 (ASFTESRGLQ) show a composition bias toward polar residues. Thr481 is subject to Phosphothreonine. Ser493 is modified (phosphoserine). The span at 526 to 535 (NSRSTPTTPQ) shows a compositional bias: polar residues. A C2H2-type zinc finger spans residues 553-578 (IDCPHPNCNKKYKHINGLRYHQAHAH). Disordered stretches follow at residues 622 to 665 (LKAP…KKKG), 713 to 750 (DKEKGKKATNCKTDKNLSKLKSARPIAPAPAPTPPQLI), and 777 to 858 (QATP…KDHL). Ser627 bears the Phosphoserine mark. Over residues 713–729 (DKEKGKKATNCKTDKNL) the composition is skewed to basic and acidic residues. The span at 781–790 (KSPPLKPIQP) shows a compositional bias: pro residues. Ser782 carries the post-translational modification Phosphoserine. Residues 818 to 858 (KLKDKEGKETGSPKMDAKLGKLEDSKGASKDLPGHFLKDHL) are compositionally biased toward basic and acidic residues. Lys880 participates in a covalent cross-link: Glycyl lysine isopeptide (Lys-Gly) (interchain with G-Cter in SUMO2). A Phosphoserine modification is found at Ser895. A compositionally biased stretch (polar residues) spans 925–934 (NGAESSAAKT). 2 disordered regions span residues 925 to 996 (NGAE…HSPY) and 1011 to 1066 (PGQV…HQSV). Positions 960–973 (SKASSPSDIISSKD) are enriched in low complexity. Ser964 carries the post-translational modification Phosphoserine. Residues 979–989 (HSSTTAQSSQL) show a composition bias toward polar residues. Over residues 1030-1054 (IKKESEEDAEKKDKAEQLDSKKVDH) the composition is skewed to basic and acidic residues. Polar residues predominate over residues 1055–1066 (NSASLQPQHQSV). Ser1098 carries the phosphoserine modification. The interval 1117-1192 (QKMAQTGRGD…SQLLSNHQQQ (76 aa)) is disordered. Residue Lys1118 forms a Glycyl lysine isopeptide (Lys-Gly) (interchain with G-Cter in SUMO2) linkage. Residues 1125 to 1145 (GDCERKSELPLKELGKEETKQ) are compositionally biased toward basic and acidic residues. The span at 1146 to 1157 (KNMPSATISKAP) shows a compositional bias: polar residues. Residues Lys1176 and Lys1182 each participate in a glycyl lysine isopeptide (Lys-Gly) (interchain with G-Cter in SUMO2) cross-link. The segment covering 1183–1192 (SQLLSNHQQQ) has biased composition (low complexity). Glycyl lysine isopeptide (Lys-Gly) (interchain with G-Cter in SUMO2) cross-links involve residues Lys1199, Lys1216, Lys1234, and Lys1250. The segment at 1220 to 1335 (DSMKQTGVDP…RGTRVAVSSP (116 aa)) is disordered. Positions 1231-1241 (SRFKQDPDSRT) are enriched in basic and acidic residues. Composition is skewed to basic and acidic residues over residues 1253–1276 (DQQKSEELDREKKLKEDSPRKTPN) and 1291–1327 (IKEEPKEAKHPDSQSMEESKLKNDDRKTPVNWKDSRG). Residues Lys1292, Lys1310, and Lys1414 each participate in a glycyl lysine isopeptide (Lys-Gly) (interchain with G-Cter in SUMO2) cross-link. The disordered stretch occupies residues 1423-1459 (ANQYRSKSPAPVEKATAEREREAERERDRHSPFGQRH). Residues 1437-1453 (ATAEREREAERERDRHS) show a composition bias toward basic and acidic residues.

Its function is as follows. Transcription factor, which represses ZNF609 transcription. The sequence is that of Zinc finger protein 608 (ZNF608) from Homo sapiens (Human).